We begin with the raw amino-acid sequence, 199 residues long: MVVIEKNRKSAISRKTTETDIQLELNLDGAGQHLIDTGVPFLNHMLTLFSVHGFLDLSLRAEGDIDIDDHHTTEDIGIVLGQAIAQALGNKGGISRYASVYLPMDEALVRIVIDLSNRPYLHYNAPVIEQKLGTFDSCLVKEFFRAVSQQAGMTLHIDMIHGENGHHIVEAIFKGFGRALSLAIEPLGTDGALSSKGCL.

This sequence belongs to the imidazoleglycerol-phosphate dehydratase family.

Its subcellular location is the cytoplasm. The catalysed reaction is D-erythro-1-(imidazol-4-yl)glycerol 3-phosphate = 3-(imidazol-4-yl)-2-oxopropyl phosphate + H2O. Its pathway is amino-acid biosynthesis; L-histidine biosynthesis; L-histidine from 5-phospho-alpha-D-ribose 1-diphosphate: step 6/9. The polypeptide is Imidazoleglycerol-phosphate dehydratase (Desulfotalea psychrophila (strain LSv54 / DSM 12343)).